The primary structure comprises 883 residues: MLQLWKVVRPARQLELHRLILLLIGFSLVSMGFLAYYVSTSPKAKEPLPLPLGDCSSSGAAGPGPARPPVPPRPQRPPETTRTEPVVLVFVESAYSQLGQEIVAILESSRFRYSTELAPGRGDMPTLTDHTHGRYVLVIYENLLKYVNLDAWSRELLDRYCVEYGVGIIGFFRAREHSLLSAQLKGFPLFLHSNLGLRDYQVNPSAPLLHLTRPSRLEPGPLPGDDWTIFQSNHSTYEPVLIASHRPAELSMPGPVLRRARLPTVVQDLGLHDGIQRVLFGHGLSFWLHKLVFVDAVAYLTGKRLCLDLDRYILVDIDDIFVGKEGTRMKVADVEALLTTQNKLRTLVPNFTFNLGFSGKFYHTGTEEEDAGDDMLLKHRREFWWFPHMWSHMQPHLFHNRSVLADQMRLNKQFALEHGIPTDLGYAVAPHHSGVYPIHSQLYEAWKSVWGIQVTSTEEYPHLRPARYRRGFIHNGIMVLPRQTCGLFTHTIFYNEYPGGSRELDRSIRGGELFLTVLLNPISVFMTHLSNYGNDRLGLYTFESLVRFLQCWTRLRLQTLPPVPLAQKYFELFPQERSPLWQNPCDDKRHKDIWSKEKTCDRLPKFLIVGPQKTGTTAIHFFLSLHPAVTSSFPSPSTFEEIQFFNGPNYHKGIDWYMDFFPVPSNASTDFLFEKSATYFDSEVVPRRGAALLPRAKIITVLINPADRAYSWYQHQRAHGDPIALNYTFYQVISASSQAPLLLRSLQNRCLVPGYYSTHLQRWLTYYPSGQLLIMDGQELRVNPAASMEIIQKFLGITPFLNYTRTLRFDEDKGFWCQGLEGGKTRCLGRSKGRRYPDMDMESRLFLTDFFRNHNLELSKLLSRLGQPAPLWLREELQHSSVG.

Residues 1-18 (MLQLWKVVRPARQLELHR) are Cytoplasmic-facing. Residues 19-39 (LILLLIGFSLVSMGFLAYYVS) form a helical; Signal-anchor for type II membrane protein membrane-spanning segment. The Lumenal segment spans residues 40–883 (TSPKAKEPLP…REELQHSSVG (844 aa)). Positions 41–597 (SPKAKEPLPL…KRHKDIWSKE (557 aa)) are heparan sulfate N-deacetylase 2. Residues 49–82 (PLPLGDCSSSGAAGPGPARPPVPPRPQRPPETTR) form a disordered region. A compositionally biased stretch (pro residues) spans 65-77 (PARPPVPPRPQRP). 3 N-linked (GlcNAc...) asparagine glycosylation sites follow: Asn-233, Asn-350, and Asn-400. The segment at 598–883 (KTCDRLPKFL…REELQHSSVG (286 aa)) is heparan sulfate N-sulfotransferase 2. The active-site For sulfotransferase activity is the Lys-613. 613-617 (KTGTT) provides a ligand contact to 3'-phosphoadenylyl sulfate. The N-linked (GlcNAc...) asparagine glycan is linked to Asn-666. Position 711 (Ser-711) interacts with 3'-phosphoadenylyl sulfate. N-linked (GlcNAc...) asparagine glycans are attached at residues Asn-726 and Asn-802. A disulfide bridge links Cys-817 with Cys-827. 3'-phosphoadenylyl sulfate is bound at residue 832-836 (KGRRY).

This sequence belongs to the sulfotransferase 1 family. NDST subfamily. In terms of assembly, monomer. As to expression, widely expressed in adult and throughout development.

It is found in the golgi apparatus membrane. The catalysed reaction is alpha-D-glucosaminyl-[heparan sulfate](n) + 3'-phosphoadenylyl sulfate = N-sulfo-alpha-D-glucosaminyl-[heparan sulfate](n) + adenosine 3',5'-bisphosphate + 2 H(+). It functions in the pathway glycan metabolism; heparan sulfate biosynthesis. It participates in glycan metabolism; heparin biosynthesis. Its function is as follows. Essential bifunctional enzyme that catalyzes both the N-deacetylation and the N-sulfation of glucosamine (GlcNAc) of the glycosaminoglycan in heparan sulfate. Modifies the GlcNAc-GlcA disaccharide repeating sugar backbone to make N-sulfated heparosan, a prerequisite substrate for later modifications in heparin biosynthesis. Plays a role in determining the extent and pattern of sulfation of heparan sulfate. Required for the exosomal release of SDCBP, CD63 and syndecan. The chain is Bifunctional heparan sulfate N-deacetylase/N-sulfotransferase 2 (Ndst2) from Mus musculus (Mouse).